The sequence spans 311 residues: Porphobilinogen deaminase (311 aa).

An S-(dipyrrolylmethanemethyl)cysteine modification is found at Cys-242.

It belongs to the HMBS family. As to quaternary structure, monomer. Dipyrromethane serves as cofactor.

The enzyme catalyses 4 porphobilinogen + H2O = hydroxymethylbilane + 4 NH4(+). The protein operates within porphyrin-containing compound metabolism; protoporphyrin-IX biosynthesis; coproporphyrinogen-III from 5-aminolevulinate: step 2/4. Tetrapolymerization of the monopyrrole PBG into the hydroxymethylbilane pre-uroporphyrinogen in several discrete steps. In Neisseria meningitidis serogroup B (strain ATCC BAA-335 / MC58), this protein is Porphobilinogen deaminase (hemC).